We begin with the raw amino-acid sequence, 298 residues long: MSSQRLRIAIQKKGRLSKECQELFKRCGMKFNISGERLVVHSENMPIDLLLVRDDDIPSLIMDGVVDLGVIGENELEEVRLERKALGEPSSFTTLRRLDFGGCRLSIAIDKDEVYNGPQDLAGKRIATTYPQLLKSFMDEQGIPFSTCILNGSVEVAPRAGLADAIADLVSTGATLEANGLKEAEVIFRSKATLIQREGEFDADKAALINKLLTRMQGCIQAKESKYIMLHAPTDKLDAIKDLLPGAEDPTVLPLSRDGAKVAVHLVSTENLFWETMEQLKALGASSILVLPIEKMME.

The protein belongs to the ATP phosphoribosyltransferase family. Long subfamily. Requires Mg(2+) as cofactor.

Its subcellular location is the cytoplasm. It carries out the reaction 1-(5-phospho-beta-D-ribosyl)-ATP + diphosphate = 5-phospho-alpha-D-ribose 1-diphosphate + ATP. It functions in the pathway amino-acid biosynthesis; L-histidine biosynthesis; L-histidine from 5-phospho-alpha-D-ribose 1-diphosphate: step 1/9. With respect to regulation, feedback inhibited by histidine. Catalyzes the condensation of ATP and 5-phosphoribose 1-diphosphate to form N'-(5'-phosphoribosyl)-ATP (PR-ATP). Has a crucial role in the pathway because the rate of histidine biosynthesis seems to be controlled primarily by regulation of HisG enzymatic activity. The protein is ATP phosphoribosyltransferase of Aliivibrio fischeri (strain MJ11) (Vibrio fischeri).